A 73-amino-acid chain; its full sequence is Cx9C motif-containing protein 4, mitochondrial (73 aa).

The region spanning 2–44 is the CHCH domain; it reads SNPCQKEACAIQDCLLSHQYDDAKCAKVIDQLYICCSKFYKDN. Short sequence motifs (cx9C motif) lie at residues 5–15 and 26–36; these read CQKEACAIQDC and CAKVIDQLYIC. Disulfide bonds link Cys-5–Cys-36 and Cys-15–Cys-26.

Belongs to the CMC4 family.

The protein localises to the mitochondrion intermembrane space. This is Cx9C motif-containing protein 4, mitochondrial (CMC4) from Saccharomyces cerevisiae (strain RM11-1a) (Baker's yeast).